The sequence spans 272 residues: Shikimate dehydrogenase (NADP(+)) (272 aa).

Shikimate is bound by residues 14–16 (SKS) and Thr61. The Proton acceptor role is filled by Lys65. Glu77 lines the NADP(+) pocket. Residues Asn86 and Asp102 each contribute to the shikimate site. Residues 126–130 (GAGGA), 149–154 (NRTASR), and Met213 contribute to the NADP(+) site. Residue Tyr215 coordinates shikimate. Residue Gly237 participates in NADP(+) binding.

The protein belongs to the shikimate dehydrogenase family. As to quaternary structure, homodimer.

It carries out the reaction shikimate + NADP(+) = 3-dehydroshikimate + NADPH + H(+). The protein operates within metabolic intermediate biosynthesis; chorismate biosynthesis; chorismate from D-erythrose 4-phosphate and phosphoenolpyruvate: step 4/7. Its function is as follows. Involved in the biosynthesis of the chorismate, which leads to the biosynthesis of aromatic amino acids. Catalyzes the reversible NADPH linked reduction of 3-dehydroshikimate (DHSA) to yield shikimate (SA). This chain is Shikimate dehydrogenase (NADP(+)), found in Salmonella typhimurium (strain LT2 / SGSC1412 / ATCC 700720).